The chain runs to 161 residues: Anaerobic nitrite reductase Glb1-1 (161 aa).

In terms of domain architecture, Globin spans 8 to 157; sequence CFTEEQEALV…LVGAIKSEMK (150 aa). Residues 41–45 carry the Homodimerization motif; that stretch reads EIAPS. Residues serine 51, lysine 65, histidine 69, lysine 99, threonine 103, and histidine 104 each coordinate heme b. The Homodimerization signature appears at 111-123; that stretch reads NEHFEVTKFALLD.

It belongs to the plant globin family. Homodimer. Requires heme b as cofactor. As to expression, mainly expressed in root nodules, and, to a lower extent, in leaves, roots, stems, flowers and fruits. Accumulates in mature root nodules.

The enzyme catalyses Fe(III)-heme b-[protein] + nitric oxide + H2O = Fe(II)-heme b-[protein] + nitrite + 2 H(+). In terms of biological role, phytoglobin that reduces nitrite to nitric oxide (NO) under anoxic conditions (e.g. during flooding or in waterlogged soil) and upon root nodulation. Required for general plant development and during nodulation, especially for the onset of symbiosis. Monitors nitric oxide (NO) levels during early phase of the nitrogen-fixing symbiosis and buffers oxygen in functioning nodules. May not function as an oxygen storage or transport protein. Has an unusually high affinity for O(2) through a hexacoordinate heme iron because of a very low dissociation constant. This chain is Anaerobic nitrite reductase Glb1-1, found in Lotus japonicus (Lotus corniculatus var. japonicus).